Consider the following 345-residue polypeptide: MSYGLTGTSSKLRGTSSIFSWTQVRHFSRRRIAYPFYPFKKLGRQHPKKHDTNLKTAMRQFLGPKNYKGEYVMNKYFTVPTNHVPNYIKPDLERGQSLEHPVTKKPLQLRYDGTLGPPPVENKRLQNIFKDRLLQPFPSNPHCKTNYVLSPQLKQSIFEEITVEGLSAQQVSQKYGLKIPRVEAIVKLVSVENSWNRRNRVSSDLKTMDETLYRMFPVFDSDASFKRENLSEIPVPQKTLASRFLTIAESEPFGPVDAAHVLELEPAVETLRNLSTVGEHSSGHQQSTNKNTKVIYGELVEGERSQYKFTNAKVGKVGYRYGSGNRDNKKDRRIGFNKLGQMVYI.

The transit peptide at 1 to 27 (MSYGLTGTSSKLRGTSSIFSWTQVRHF) directs the protein to the mitochondrion.

This sequence belongs to the mitochondrion-specific ribosomal protein mS45 family. Component of the mitochondrial small ribosomal subunit (mt-SSU). Mature yeast 74S mitochondrial ribosomes consist of a small (37S) and a large (54S) subunit. The 37S small subunit contains a 15S ribosomal RNA (15S mt-rRNA) and 34 different proteins. The 54S large subunit contains a 21S rRNA (21S mt-rRNA) and 46 different proteins.

Its subcellular location is the mitochondrion. Component of the mitochondrial ribosome (mitoribosome), a dedicated translation machinery responsible for the synthesis of mitochondrial genome-encoded proteins, including at least some of the essential transmembrane subunits of the mitochondrial respiratory chain. The mitoribosomes are attached to the mitochondrial inner membrane and translation products are cotranslationally integrated into the membrane. The polypeptide is Small ribosomal subunit protein mS45 (MRPS35) (Saccharomyces cerevisiae (strain ATCC 204508 / S288c) (Baker's yeast)).